Consider the following 329-residue polypeptide: Pantothenate kinase (329 aa).

The interval 1-22 is disordered; the sequence is MPAQGPSHGELPPADAGRESSP. 107–114 contacts ATP; the sequence is GSVAVGKS.

Belongs to the prokaryotic pantothenate kinase family.

Its subcellular location is the cytoplasm. It catalyses the reaction (R)-pantothenate + ATP = (R)-4'-phosphopantothenate + ADP + H(+). The protein operates within cofactor biosynthesis; coenzyme A biosynthesis; CoA from (R)-pantothenate: step 1/5. The protein is Pantothenate kinase of Nocardioides sp. (strain ATCC BAA-499 / JS614).